Here is a 316-residue protein sequence, read N- to C-terminus: MNHFKTYMLLAGLTALFMGAGFLIGGATGMMIALVFALAMNAFSYWNADKIVLRTYGAVEVDESHPEPLIRNYVIDTVEMARSAGLPRPRITVIDSAQPNAFATGRDPDHAAVAASTGLLQLLTREEIRGVMAHELAHVKNRDTLVMTVTATIAGAISALANFAFFFGGSRDEEGNGGGLGGMIGAILIAILAPIAAMLVQMAISRAREYEADRIGAQIAGDSESLARALQKIEAYARGGYENVQAERNPATAHMFIINPLAGKGADNLFSTHPATHNRVEALMRLGVERGARRPVMAATTSSSVPLSGERGGPWS.

A helical transmembrane segment spans residues 16–36 (LFMGAGFLIGGATGMMIALVF). Residue histidine 134 participates in Zn(2+) binding. The active site involves glutamate 135. Histidine 138 contacts Zn(2+). A run of 2 helical transmembrane segments spans residues 149–169 (VTATIAGAISALANFAFFFGG) and 180–200 (LGGMIGAILIAILAPIAAMLV). Residue glutamate 209 coordinates Zn(2+). Residues 295-316 (PVMAATTSSSVPLSGERGGPWS) form a disordered region.

This sequence belongs to the peptidase M48B family. Zn(2+) is required as a cofactor.

Its subcellular location is the cell inner membrane. The chain is Protease HtpX homolog from Caulobacter vibrioides (strain ATCC 19089 / CIP 103742 / CB 15) (Caulobacter crescentus).